A 236-amino-acid chain; its full sequence is MATTHLDVCAVVPAAGFGRRMQTECPKQYLSIGNQTILEHSVHALLAHPRVTRVVIAISPGDSRFAQLPLANHPQITVVDGGDERADSVLAGLKAAGDVQWVLVHDAARPCLHQDDLARLLALSETSRTGGILAAPVRDTMKRAEPGKNAIAHTVDRNGLWHALTPQFFPRELLHDCLTRALNEGATITDEASALEYCGFHPQLVEGRADNIKVTRPEDLALAEFYLTRTIHQENT.

This sequence belongs to the IspD/TarI cytidylyltransferase family. IspD subfamily. In terms of assembly, homodimer.

It carries out the reaction 2-C-methyl-D-erythritol 4-phosphate + CTP + H(+) = 4-CDP-2-C-methyl-D-erythritol + diphosphate. It functions in the pathway isoprenoid biosynthesis; isopentenyl diphosphate biosynthesis via DXP pathway; isopentenyl diphosphate from 1-deoxy-D-xylulose 5-phosphate: step 2/6. Catalyzes the formation of 4-diphosphocytidyl-2-C-methyl-D-erythritol from CTP and 2-C-methyl-D-erythritol 4-phosphate (MEP). The protein is 2-C-methyl-D-erythritol 4-phosphate cytidylyltransferase of Shigella flexneri serotype 5b (strain 8401).